The sequence spans 98 residues: Ferredoxin-3 (98 aa).

2 4Fe-4S ferredoxin-type domains span residues 18-47 (FVEA…LQAL) and 66-95 (VMSI…HSPL). C27, C30, C33, C37, C75, C78, C81, and C85 together coordinate [4Fe-4S] cluster.

As to quaternary structure, homodimer. [4Fe-4S] cluster is required as a cofactor.

Its function is as follows. Ferredoxins are iron-sulfur proteins that transfer electrons in a wide variety of metabolic reactions. The chain is Ferredoxin-3 (fdxB) from Trichormus variabilis (strain ATCC 29413 / PCC 7937) (Anabaena variabilis).